The following is a 181-amino-acid chain: MMRLKEKYNQSIKPALVKEFDIKNPMLIPVIEKVVISVGAGELAKDQKVLQNVADTISLIAGQKAVITKAKKSVAGFKVREGFPVGVMVTLRKENMYAFLDKLISIALPRVKDFRGLSRDGFDGRGNYNFGLDEQLMFPEVEYDKILRTHGMNISIVTTAQNDKQAQKLLELIGVPFTKGK.

The protein belongs to the universal ribosomal protein uL5 family. In terms of assembly, part of the 50S ribosomal subunit; part of the 5S rRNA/L5/L18/L25 subcomplex. Contacts the 5S rRNA and the P site tRNA. Forms a bridge to the 30S subunit in the 70S ribosome.

Functionally, this is one of the proteins that bind and probably mediate the attachment of the 5S RNA into the large ribosomal subunit, where it forms part of the central protuberance. In the 70S ribosome it contacts protein S13 of the 30S subunit (bridge B1b), connecting the 2 subunits; this bridge is implicated in subunit movement. Contacts the P site tRNA; the 5S rRNA and some of its associated proteins might help stabilize positioning of ribosome-bound tRNAs. The sequence is that of Large ribosomal subunit protein uL5 from Campylobacter jejuni subsp. jejuni serotype O:6 (strain 81116 / NCTC 11828).